The primary structure comprises 138 residues: 1,4-dihydroxy-2-naphthoyl-CoA hydrolase (138 aa).

The active site involves Asp14.

The protein belongs to the 4-hydroxybenzoyl-CoA thioesterase family. DHNA-CoA hydrolase subfamily.

It carries out the reaction 1,4-dihydroxy-2-naphthoyl-CoA + H2O = 1,4-dihydroxy-2-naphthoate + CoA + H(+). It participates in cofactor biosynthesis; phylloquinone biosynthesis. Its pathway is quinol/quinone metabolism; 1,4-dihydroxy-2-naphthoate biosynthesis; 1,4-dihydroxy-2-naphthoate from chorismate: step 7/7. Catalyzes the hydrolysis of 1,4-dihydroxy-2-naphthoyl-CoA (DHNA-CoA) to 1,4-dihydroxy-2-naphthoate (DHNA), a reaction involved in phylloquinone (vitamin K1) biosynthesis. In Rippkaea orientalis (strain PCC 8801 / RF-1) (Cyanothece sp. (strain PCC 8801)), this protein is 1,4-dihydroxy-2-naphthoyl-CoA hydrolase.